The following is a 219-amino-acid chain: Trafficking protein particle complex subunit 4 (219 aa).

This sequence belongs to the TRAPP small subunits family. TRAPPC4 subfamily. Component of the multisubunit TRAPP (transport protein particle) complex, which includes at least TRAPPC2, TRAPPC2L, TRAPPC3, TRAPPC3L, TRAPPC4, TRAPPC5, TRAPPC8, TRAPPC9, TRAPPC10, TRAPPC11 and TRAPPC12. Interacts with SDC2. Widely expressed.

It is found in the postsynaptic cell membrane. It localises to the golgi apparatus membrane. Its subcellular location is the endoplasmic reticulum. The protein localises to the vesicle. Its function is as follows. Core component of the TRAPP complexes which has a function of guanine nucleotide exchange factor activity for Rab1 GTPase. Plays a role in vesicular transport from endoplasmic reticulum to Golgi and autophagy. May play a role in dendrite postsynaptic membrane trafficking. This Mus musculus (Mouse) protein is Trafficking protein particle complex subunit 4.